The sequence spans 74 residues: Small ribosomal subunit protein eS17 (74 aa).

The protein belongs to the eukaryotic ribosomal protein eS17 family.

The polypeptide is Small ribosomal subunit protein eS17 (Ignicoccus hospitalis (strain KIN4/I / DSM 18386 / JCM 14125)).